A 125-amino-acid chain; its full sequence is Large ribosomal subunit protein bL12 (125 aa).

It belongs to the bacterial ribosomal protein bL12 family. As to quaternary structure, homodimer. Part of the 50S ribosomal subunit; present in 6 copies per ribosome. Forms part of the ribosomal stalk which helps the ribosome interact with GTP-bound translation factors. Forms a heptameric L10(L12)2(L12)2(L12)2 complex, where L10 forms an elongated spine to which 3 L12 dimers bind in a sequential fashion.

Functionally, forms part of the ribosomal stalk which helps the ribosome interact with GTP-bound translation factors. Is thus essential for accurate translation. The chain is Large ribosomal subunit protein bL12 from Agrobacterium fabrum (strain C58 / ATCC 33970) (Agrobacterium tumefaciens (strain C58)).